We begin with the raw amino-acid sequence, 224 residues long: Glycerol-3-phosphate acyltransferase (224 aa).

A run of 6 helical transmembrane segments spans residues Phe-4–Asn-24, Leu-60–Val-80, Ser-88–Trp-108, Ile-124–Ile-144, Ile-149–Trp-169, and Trp-182–His-202.

The protein belongs to the PlsY family. As to quaternary structure, probably interacts with PlsX.

The protein localises to the cell membrane. It catalyses the reaction an acyl phosphate + sn-glycerol 3-phosphate = a 1-acyl-sn-glycero-3-phosphate + phosphate. Its pathway is lipid metabolism; phospholipid metabolism. Functionally, catalyzes the transfer of an acyl group from acyl-phosphate (acyl-PO(4)) to glycerol-3-phosphate (G3P) to form lysophosphatidic acid (LPA). This enzyme utilizes acyl-phosphate as fatty acyl donor, but not acyl-CoA or acyl-ACP. This is Glycerol-3-phosphate acyltransferase from Mycoplasmopsis pulmonis (strain UAB CTIP) (Mycoplasma pulmonis).